Reading from the N-terminus, the 333-residue chain is Foldase protein PrsA (333 aa).

Positions Met1–Ala22 are cleaved as a signal peptide. Cys23 is lipidated: N-palmitoyl cysteine. Residue Cys23 is the site of S-diacylglycerol cysteine attachment. Residues Thr145 to Lys240 enclose the PpiC domain. A disordered region spans residues Asp301–Lys333. Positions Ser312–Lys322 are enriched in basic and acidic residues. The span at Asp323 to Lys333 shows a compositional bias: low complexity.

The protein belongs to the PrsA family.

It is found in the cell membrane. It carries out the reaction [protein]-peptidylproline (omega=180) = [protein]-peptidylproline (omega=0). Its function is as follows. Plays a major role in protein secretion by helping the post-translocational extracellular folding of several secreted proteins. This Streptococcus equi subsp. equi (strain 4047) protein is Foldase protein PrsA.